A 642-amino-acid polypeptide reads, in one-letter code: Kinesin-2b (642 aa).

The 333-residue stretch at 12–344 folds into the Kinesin motor domain; that stretch reads NVMVMVRVRP…LRYADRAKQI (333 aa). 107-114 is a binding site for ATP; the sequence is GQTGSGKT. Positions 110, 112, 113, and 114 each coordinate ADP. Thr-114 is a Mg(2+) binding site. A coiled-coil region spans residues 415–475; it reads VQSLRKNLDK…ERKAKERQLM (61 aa).

The protein belongs to the TRAFAC class myosin-kinesin ATPase superfamily. Kinesin family. Kinesin II subfamily.

The protein resides in the cell projection. The protein localises to the cilium. It localises to the flagellum. It is found in the cytoplasm. Its subcellular location is the cytoskeleton. The protein resides in the flagellum axoneme. The protein localises to the flagellum basal body. In terms of biological role, involved in anterograde intraflagellar transport (IFT). Involved in flagellar assembly. The protein is Kinesin-2b of Giardia intestinalis (strain ATCC 50803 / WB clone C6) (Giardia lamblia).